Reading from the N-terminus, the 94-residue chain is Probable Fe(2+)-trafficking protein (94 aa).

This sequence belongs to the Fe(2+)-trafficking protein family.

Its function is as follows. Could be a mediator in iron transactions between iron acquisition and iron-requiring processes, such as synthesis and/or repair of Fe-S clusters in biosynthetic enzymes. In Haemophilus ducreyi (strain 35000HP / ATCC 700724), this protein is Probable Fe(2+)-trafficking protein.